Here is a 211-residue protein sequence, read N- to C-terminus: Large ribosomal subunit protein uL3 (211 aa).

Glutamine 150 bears the N5-methylglutamine mark.

Belongs to the universal ribosomal protein uL3 family. In terms of assembly, part of the 50S ribosomal subunit. Forms a cluster with proteins L14 and L19. Methylated by PrmB.

Functionally, one of the primary rRNA binding proteins, it binds directly near the 3'-end of the 23S rRNA, where it nucleates assembly of the 50S subunit. This Pseudomonas syringae pv. tomato (strain ATCC BAA-871 / DC3000) protein is Large ribosomal subunit protein uL3.